An 891-amino-acid chain; its full sequence is Alanine--tRNA ligase (891 aa).

Positions 569, 573, 671, and 675 each coordinate Zn(2+).

This sequence belongs to the class-II aminoacyl-tRNA synthetase family. Homotetramer. The cofactor is Zn(2+).

The protein resides in the cytoplasm. It carries out the reaction tRNA(Ala) + L-alanine + ATP = L-alanyl-tRNA(Ala) + AMP + diphosphate. Its function is as follows. Catalyzes the attachment of alanine to tRNA(Ala) in a two-step reaction: alanine is first activated by ATP to form Ala-AMP and then transferred to the acceptor end of tRNA(Ala). Also edits incorrectly charged Ser-tRNA(Ala) and Gly-tRNA(Ala) via its editing domain. The sequence is that of Alanine--tRNA ligase from Blochmanniella floridana.